Here is a 1728-residue protein sequence, read N- to C-terminus: Mitochondrial 3' processome subunit 1 (1728 aa).

A mitochondrion-targeting transit peptide spans 1–117 (MRRLILSQTL…AGKMTGSSRF (117 aa)). 3 disordered regions span residues 45-71 (HRKR…SGDG), 88-156 (ESPV…IGQQ), and 829-863 (GCNR…PKGT).

As to quaternary structure, component of the mitochondrial 3' processome (MPsome) complex composed at least of terminal uridylyltransferase KRET1/TUT1, 3'-5' exonuclease DSS1, MPSS1, MPSS2 and MPSS3. Within the complex, interacts with KRET1.

The protein localises to the mitochondrion. Its function is as follows. As part of the mitochondrial 3' processome (MPsome), involved in the maturation of guided RNA (gRNA) precursors. In Trypanosoma brucei brucei, this protein is Mitochondrial 3' processome subunit 1.